We begin with the raw amino-acid sequence, 477 residues long: UDP-N-acetylmuramate--L-alanine ligase (477 aa).

117-123 provides a ligand contact to ATP; the sequence is GTHGKTT.

Belongs to the MurCDEF family.

It localises to the cytoplasm. It catalyses the reaction UDP-N-acetyl-alpha-D-muramate + L-alanine + ATP = UDP-N-acetyl-alpha-D-muramoyl-L-alanine + ADP + phosphate + H(+). It functions in the pathway cell wall biogenesis; peptidoglycan biosynthesis. Functionally, cell wall formation. The protein is UDP-N-acetylmuramate--L-alanine ligase of Phenylobacterium zucineum (strain HLK1).